Here is a 205-residue protein sequence, read N- to C-terminus: LexA repressor (205 aa).

A DNA-binding region (H-T-H motif) is located at residues 28–48 (RAELMRAFDFRSPNAAESHLR). Active-site for autocatalytic cleavage activity residues include Ser120 and Lys159.

The protein belongs to the peptidase S24 family. In terms of assembly, homodimer.

The catalysed reaction is Hydrolysis of Ala-|-Gly bond in repressor LexA.. In terms of biological role, represses a number of genes involved in the response to DNA damage (SOS response), including recA and lexA. In the presence of single-stranded DNA, RecA interacts with LexA causing an autocatalytic cleavage which disrupts the DNA-binding part of LexA, leading to derepression of the SOS regulon and eventually DNA repair. In Acidithiobacillus ferrooxidans (strain ATCC 23270 / DSM 14882 / CIP 104768 / NCIMB 8455) (Ferrobacillus ferrooxidans (strain ATCC 23270)), this protein is LexA repressor.